The chain runs to 384 residues: Centrosomal protein of 44 kDa (384 aa).

The interval 11-188 is binds with microtubules and centrioles; that stretch reads RKLEQRLRTL…TKCYSSALVE (178 aa). Positions 191 to 222 are disordered; the sequence is EEEEPTSDSEGGSHLEHEMESPFETAETTPNS. Basic and acidic residues predominate over residues 201-210; it reads GGSHLEHEME. Coiled-coil stretches lie at residues 221-260 and 353-378; these read NSEQIELLRKQLAECQEKLQRLDCVEQRLQSLETSMKGKI and TEDSNETTKQRMERITKMMEETSKLL.

In terms of assembly, binds to centriolar microtubules.

It localises to the cytoplasm. The protein resides in the cytoskeleton. Its subcellular location is the microtubule organizing center. It is found in the centrosome. The protein localises to the centriole. It localises to the spindle pole. The protein resides in the midbody. Functionally, centriole-enriched microtubule-binding protein involved in centriole biogenesis. In collaboration with CEP295 and POC1B, is required for the centriole-to-centrosome conversion by ensuring the formation of bona fide centriole wall. Functions as a linker component that maintains centrosome cohesion. Associates with CROCC and regulates its stability and localization to the centrosome. This Xenopus laevis (African clawed frog) protein is Centrosomal protein of 44 kDa (cep44).